The following is a 404-amino-acid chain: Cysteine--tRNA ligase (404 aa).

Residue C14 participates in Zn(2+) binding. The short motif at 16-26 (PTVYSDVHIGN) is the 'HIGH' region element. Residues C190, H216, and E220 each coordinate Zn(2+). The 'KMSKS' region signature appears at 248–252 (KMAKS). K251 lines the ATP pocket.

The protein belongs to the class-I aminoacyl-tRNA synthetase family. Monomer. The cofactor is Zn(2+).

The protein localises to the cytoplasm. It carries out the reaction tRNA(Cys) + L-cysteine + ATP = L-cysteinyl-tRNA(Cys) + AMP + diphosphate. This Mesomycoplasma hyopneumoniae (strain 232) (Mycoplasma hyopneumoniae) protein is Cysteine--tRNA ligase.